We begin with the raw amino-acid sequence, 207 residues long: Thiamine-phosphate synthase (207 aa).

4-amino-2-methyl-5-(diphosphooxymethyl)pyrimidine is bound by residues 36–40 (QLRIK) and aspartate 68. Mg(2+) contacts are provided by aspartate 69 and aspartate 88. Residue serine 106 coordinates 4-amino-2-methyl-5-(diphosphooxymethyl)pyrimidine. 132-134 (TKT) contacts 2-[(2R,5Z)-2-carboxy-4-methylthiazol-5(2H)-ylidene]ethyl phosphate. Residue lysine 135 coordinates 4-amino-2-methyl-5-(diphosphooxymethyl)pyrimidine. Residues glycine 162 and 182–183 (VS) contribute to the 2-[(2R,5Z)-2-carboxy-4-methylthiazol-5(2H)-ylidene]ethyl phosphate site.

It belongs to the thiamine-phosphate synthase family. Mg(2+) is required as a cofactor.

The enzyme catalyses 2-[(2R,5Z)-2-carboxy-4-methylthiazol-5(2H)-ylidene]ethyl phosphate + 4-amino-2-methyl-5-(diphosphooxymethyl)pyrimidine + 2 H(+) = thiamine phosphate + CO2 + diphosphate. It carries out the reaction 2-(2-carboxy-4-methylthiazol-5-yl)ethyl phosphate + 4-amino-2-methyl-5-(diphosphooxymethyl)pyrimidine + 2 H(+) = thiamine phosphate + CO2 + diphosphate. The catalysed reaction is 4-methyl-5-(2-phosphooxyethyl)-thiazole + 4-amino-2-methyl-5-(diphosphooxymethyl)pyrimidine + H(+) = thiamine phosphate + diphosphate. It participates in cofactor biosynthesis; thiamine diphosphate biosynthesis; thiamine phosphate from 4-amino-2-methyl-5-diphosphomethylpyrimidine and 4-methyl-5-(2-phosphoethyl)-thiazole: step 1/1. Functionally, condenses 4-methyl-5-(beta-hydroxyethyl)thiazole monophosphate (THZ-P) and 2-methyl-4-amino-5-hydroxymethyl pyrimidine pyrophosphate (HMP-PP) to form thiamine monophosphate (TMP). The chain is Thiamine-phosphate synthase from Pyrococcus abyssi (strain GE5 / Orsay).